Consider the following 492-residue polypeptide: Aspartyl/glutamyl-tRNA(Asn/Gln) amidotransferase subunit B (492 aa).

This sequence belongs to the GatB/GatE family. GatB subfamily. As to quaternary structure, heterotrimer of A, B and C subunits.

The catalysed reaction is L-glutamyl-tRNA(Gln) + L-glutamine + ATP + H2O = L-glutaminyl-tRNA(Gln) + L-glutamate + ADP + phosphate + H(+). The enzyme catalyses L-aspartyl-tRNA(Asn) + L-glutamine + ATP + H2O = L-asparaginyl-tRNA(Asn) + L-glutamate + ADP + phosphate + 2 H(+). Functionally, allows the formation of correctly charged Asn-tRNA(Asn) or Gln-tRNA(Gln) through the transamidation of misacylated Asp-tRNA(Asn) or Glu-tRNA(Gln) in organisms which lack either or both of asparaginyl-tRNA or glutaminyl-tRNA synthetases. The reaction takes place in the presence of glutamine and ATP through an activated phospho-Asp-tRNA(Asn) or phospho-Glu-tRNA(Gln). The protein is Aspartyl/glutamyl-tRNA(Asn/Gln) amidotransferase subunit B of Dehalococcoides mccartyi (strain ATCC BAA-2266 / KCTC 15142 / 195) (Dehalococcoides ethenogenes (strain 195)).